Consider the following 346-residue polypeptide: Ferredoxin--NADP reductase (346 aa).

The FAD site is built by glutamate 35, glutamine 43, tyrosine 48, valine 88, phenylalanine 122, aspartate 287, and threonine 327.

Belongs to the ferredoxin--NADP reductase type 2 family. Homodimer. It depends on FAD as a cofactor.

The enzyme catalyses 2 reduced [2Fe-2S]-[ferredoxin] + NADP(+) + H(+) = 2 oxidized [2Fe-2S]-[ferredoxin] + NADPH. The protein is Ferredoxin--NADP reductase of Oenococcus oeni (strain ATCC BAA-331 / PSU-1).